The following is a 165-amino-acid chain: Large ribosomal subunit protein uL10 (165 aa).

Belongs to the universal ribosomal protein uL10 family. Part of the ribosomal stalk of the 50S ribosomal subunit. The N-terminus interacts with L11 and the large rRNA to form the base of the stalk. The C-terminus forms an elongated spine to which L12 dimers bind in a sequential fashion forming a multimeric L10(L12)X complex.

In terms of biological role, forms part of the ribosomal stalk, playing a central role in the interaction of the ribosome with GTP-bound translation factors. In Burkholderia mallei (strain NCTC 10229), this protein is Large ribosomal subunit protein uL10.